Here is a 35-residue protein sequence, read N- to C-terminus: Mu-theraphotoxin-Pn3b (35 aa).

3 disulfides stabilise this stretch: cysteine 2–cysteine 16, cysteine 9–cysteine 21, and cysteine 15–cysteine 28.

Belongs to the neurotoxin 10 (Hwtx-1) family. 28 (Jztx-11) subfamily. As to expression, expressed by the venom gland.

Its subcellular location is the secreted. Its function is as follows. Gating-modifier toxin that targets voltage-gated sodium channels with a preferential activity on Nav1.7/SCN9A. On Nav1.7/SCN9A, the toxin acts by shifting the voltage-dependence of activation to more depolarized potentials, whereas it does not cause significant effect on the voltage-dependence of activation on other sodium channels. Minor effects are observed on the voltage-dependence of steady-state fast inactivation for all sodium channels tested (Nav1.1/SCN1A-Nav1.8/SCN10A). By testing the toxin on channel chimera, it has been shown to interact with the S3-S4 linkers in DII and DIV domains of Nav1.7/SCN9A. In vivo, the toxin dose-dependently reduces OD1-induced spontaneous pain behaviors. This Pamphobeteus nigricolor (Giant blue bloom tarantula) protein is Mu-theraphotoxin-Pn3b.